Consider the following 348-residue polypeptide: MSQKARPTFYRQELNKTIWEVPERYQNLSPVGSGAYGSVMSAFDGKAGLRVAVKKLSRPFQSIIHAKRTYRELRLLKHMKHENVIGLLDVFSPATSLEGFNDVYLVTHLMGADLNNIVKCQKLTDDHVQFLIYQILRALKYIHSADIIHRDLKPSNLAVNEDCELKILDFGLARLTDDEMTGYVATRWYRAPEIMLNWMHYNMTVDIWSVGCIMAELLTGRTLFPGTDHINQLQQIMRLTGTPPASLISRMPSHEARNYISSLPHMPKRNFADVFIGANPLAVDLLEKMLVLDTDKRITASQALAHPYFAQYHDPDDEPEADPYDQSFESRDLEIEEWKSKIYIQNRN.

The Protein kinase domain maps to 25–309 (YQNLSPVGSG…ASQALAHPYF (285 aa)). ATP-binding positions include 31 to 39 (VGSGAYGSV) and Lys54. Asp169 serves as the catalytic Proton acceptor. Thr181 carries the phosphothreonine; by MAP2K3 modification. The TXY motif lies at 181-183 (TGY). A Phosphotyrosine; by MAP2K3 modification is found at Tyr183.

Belongs to the protein kinase superfamily. CMGC Ser/Thr protein kinase family. MAP kinase subfamily. Requires Mg(2+) as cofactor. Post-translationally, dually phosphorylated on Thr-181 and Tyr-183, which activates the enzyme.

It is found in the cytoplasm. The protein resides in the nucleus. It catalyses the reaction L-seryl-[protein] + ATP = O-phospho-L-seryl-[protein] + ADP + H(+). The catalysed reaction is L-threonyl-[protein] + ATP = O-phospho-L-threonyl-[protein] + ADP + H(+). With respect to regulation, activated by threonine and tyrosine phosphorylation by the dual specificity kinase, MKK3. In terms of biological role, serine/threonine kinase which acts as an essential component of the MAP kinase signal transduction pathway. Mapk14b is one of the four p38 MAPKs which play an important role in the cascades of cellular responses evoked by extracellular stimuli such as pro-inflammatory cytokines or physical stress leading to direct activation of transcription factors. Accordingly, p38 MAPKs phosphorylate a broad range of proteins and it has been estimated that they may have approximately 200 to 300 substrates each. Some of the targets are downstream kinases which are activated through phosphorylation and further phosphorylate additional targets. The polypeptide is Mitogen-activated protein kinase 14B (mapk14b) (Danio rerio (Zebrafish)).